The chain runs to 286 residues: Dioxygenase trt7 (286 aa).

Positions 129, 131, and 206 each coordinate Fe cation.

This sequence belongs to the PhyH family. In terms of assembly, homodimer. The cofactor is Fe cation.

It participates in secondary metabolite biosynthesis; terpenoid biosynthesis. Dioxygenase; part of the gene cluster that mediates the biosynthesis of terretonin, a fungal meroterpenoid that acts as a mycotoxin. The first step of the pathway is the synthesis of 3,5-dimethylorsellinic acid (DMOA) by the polyketide synthase trt4. DMOA is then prenylated into farnesyl-DMOA by the polyprenyl transferase trt2. Methylation by the methyltransferase trt5 then leads to farnesyl-DMOA methyl ester which is further subject to epoxidation by the FAD-dependent monooxygenase trt8 to yield epoxyfarnesyl-DMOA methyl ester. Cyclization of epoxyfarnesyl-DMOA methyl ester by the terpene cyclase trt1 leads to a tetracycle intermediate which is in turn converted to preterretonin. Dehydrogenase trt9 comes next to transform preterretonin to preterrenoid. The FAD-dependent monooxygenase trt3 is then required for the C-hydroxylation at C16 of preterrenoid to yield terrenoid. The cytochrome P450 trt6 catalyzes three successive oxidations to transform terrenoid into an unstable intermediate, which then undergoes the D-ring expansion and unusual rearrangement of the methoxy group to afford the core skeleton of terretonin. Trt14 catalyzes the D-ring expansion of terretonin involving intramolecular methoxy rearrangement as well as the hydrolysis of the expanded D-ring and the methyl ester moiety. Finally, the nonheme iron-dependent dioxygenase trt7 accomplishes the last two oxidation reactions steps to complete the biosynthesis of terretonin. Terretonin C is produced via spontaneous decarboxylation of the terretonin precursor. Another shunt product of the terretonin biosynthesis is dihydrofarnesyl-DMOA, derived from epoxyfarnesyl-DMOA through hydrolysis of the epoxide. In Aspergillus terreus (strain NIH 2624 / FGSC A1156), this protein is Dioxygenase trt7.